Reading from the N-terminus, the 75-residue chain is UPF0270 protein PST_1436 (75 aa).

This sequence belongs to the UPF0270 family.

This is UPF0270 protein PST_1436 from Stutzerimonas stutzeri (strain A1501) (Pseudomonas stutzeri).